We begin with the raw amino-acid sequence, 183 residues long: Ferredoxin-2, mitochondrial (183 aa).

Residues Met-1–Pro-52 constitute a mitochondrion transit peptide. The disordered stretch occupies residues Phe-45–Gly-65. Residues Val-68–Thr-170 enclose the 2Fe-2S ferredoxin-type domain. 4 residues coordinate [2Fe-2S] cluster: Cys-105, Cys-111, Cys-114, and Cys-151.

It belongs to the adrenodoxin/putidaredoxin family. As to quaternary structure, component of the mitochondrial core iron-sulfur cluster (ISC) complex composed of NFS1, LYRM4, NDUFAB1, ISCU, FXN, and FDX2; this complex is a heterohexamer containing two copies of each monomer. Form a heterodimer complex with NFS1. Interacts (in both their reduced and oxidized states) with the cysteine desulfurase complex; this interaction stimulates cysteine desulfurase activity, and serves as a reductant for Fe-S cluster assembly. Requires [2Fe-2S] cluster as cofactor. Widely expressed, with highest levels in testis, kidney and brain (at protein level). Expressed in muscle (at protein level). Expressed in fibroblasts (at protein level).

The protein localises to the mitochondrion. It is found in the mitochondrion matrix. Electron donor, of the core iron-sulfur cluster (ISC) assembly complex, that acts to reduce the persulfide into sulfide during [2Fe-2S] clusters assembly on the scaffolding protein ISCU. The core iron-sulfur cluster (ISC) assembly complex is involved in the de novo synthesis of a [2Fe-2S] cluster, the first step of the mitochondrial iron-sulfur protein biogenesis. This process is initiated by the cysteine desulfurase complex (NFS1:LYRM4:NDUFAB1) that produces persulfide which is delivered on the scaffold protein ISCU in a FXN-dependent manner. Then this complex is stabilized by FDX2 which provides reducing equivalents to accomplish the [2Fe-2S] cluster assembly. Finally, the [2Fe-2S] cluster is transferred from ISCU to chaperone proteins, including HSCB, HSPA9 and GLRX5. Essential for coenzyme Q biosynthesis: together with FDXR, transfers the electrons required for the hydroxylation reaction performed by COQ6. This chain is Ferredoxin-2, mitochondrial, found in Homo sapiens (Human).